A 147-amino-acid polypeptide reads, in one-letter code: Anti-sigma F factor (147 aa).

It belongs to the anti-sigma-factor family.

It catalyses the reaction L-seryl-[protein] + ATP = O-phospho-L-seryl-[protein] + ADP + H(+). It carries out the reaction L-threonyl-[protein] + ATP = O-phospho-L-threonyl-[protein] + ADP + H(+). Binds to sigma F and blocks its ability to form an RNA polymerase holoenzyme (E-sigma F). Phosphorylates SpoIIAA on a serine residue. This phosphorylation may enable SpoIIAA to act as an anti-anti-sigma factor that counteracts SpoIIAB and thus releases sigma F from inhibition. The protein is Anti-sigma F factor of Priestia megaterium (Bacillus megaterium).